We begin with the raw amino-acid sequence, 873 residues long: Alanine--tRNA ligase (873 aa).

Residues His559, His563, Cys661, and His665 each coordinate Zn(2+).

This sequence belongs to the class-II aminoacyl-tRNA synthetase family. Homotetramer. The cofactor is Zn(2+).

Its subcellular location is the cytoplasm. The enzyme catalyses tRNA(Ala) + L-alanine + ATP = L-alanyl-tRNA(Ala) + AMP + diphosphate. In terms of biological role, catalyzes the attachment of alanine to tRNA(Ala) in a two-step reaction: alanine is first activated by ATP to form Ala-AMP and then transferred to the acceptor end of tRNA(Ala). Also edits incorrectly charged Ser-tRNA(Ala) and Gly-tRNA(Ala) via its editing domain. This chain is Alanine--tRNA ligase, found in Wigglesworthia glossinidia brevipalpis.